A 509-amino-acid chain; its full sequence is Glycogen synthase (509 aa).

Position 47 (Lys47) interacts with ADP-alpha-D-glucose.

It belongs to the glycosyltransferase 1 family. Bacterial/plant glycogen synthase subfamily.

It carries out the reaction [(1-&gt;4)-alpha-D-glucosyl](n) + ADP-alpha-D-glucose = [(1-&gt;4)-alpha-D-glucosyl](n+1) + ADP + H(+). It participates in glycan biosynthesis; glycogen biosynthesis. Functionally, synthesizes alpha-1,4-glucan chains using ADP-glucose. The protein is Glycogen synthase of Xanthomonas oryzae pv. oryzae (strain PXO99A).